Here is a 68-residue protein sequence, read N- to C-terminus: Large ribosomal subunit protein bL31 (68 aa).

Residues cysteine 16, cysteine 18, cysteine 37, and cysteine 40 each coordinate Zn(2+).

This sequence belongs to the bacterial ribosomal protein bL31 family. Type A subfamily. Part of the 50S ribosomal subunit. It depends on Zn(2+) as a cofactor.

Its function is as follows. Binds the 23S rRNA. The chain is Large ribosomal subunit protein bL31 from Nitrosococcus oceani (strain ATCC 19707 / BCRC 17464 / JCM 30415 / NCIMB 11848 / C-107).